A 2324-amino-acid polypeptide reads, in one-letter code: Serine/threonine-protein kinase MEC1 (2324 aa).

An FAT domain is found at 1349 to 1901 (VLAQKSLETN…LWYITVLLNS (553 aa)). In terms of domain architecture, PI3K/PI4K catalytic spans 2005–2308 (FTPHYKVYSS…QVDTVVQQAS (304 aa)). The interval 2011–2017 (VYSSLKK) is G-loop. The interval 2177 to 2185 (GLGDRHLEN) is catalytic loop. The activation loop stretch occupies residues 2197 to 2221 (HVDFDCLFEKGKTLPVPEIVPFRLT). Residues 2292-2324 (LPLSVPGQVDTVVQQASSDENLAQMYIGWLPFW) form the FATC domain.

It belongs to the PI3/PI4-kinase family. ATM subfamily.

It localises to the nucleus. The enzyme catalyses L-seryl-[protein] + ATP = O-phospho-L-seryl-[protein] + ADP + H(+). It carries out the reaction L-threonyl-[protein] + ATP = O-phospho-L-threonyl-[protein] + ADP + H(+). Its function is as follows. Serine/threonine protein kinase which activates checkpoint signaling upon genotoxic stresses such as ionizing radiation (IR), ultraviolet light (UV), or DNA replication stalling, thereby acting as a DNA damage sensor. Recognizes the substrate consensus sequence [ST]-Q. Recruited to DNA lesions in order to initiate the DNA repair by homologous recombination. Phosphorylates histone H2A to form H2AS128ph (gamma-H2A) at sites of DNA damage, also involved in the regulation of DNA damage response mechanism. Required for cell growth and meiotic recombination. The sequence is that of Serine/threonine-protein kinase MEC1 (MEC1) from Eremothecium gossypii (strain ATCC 10895 / CBS 109.51 / FGSC 9923 / NRRL Y-1056) (Yeast).